A 640-amino-acid chain; its full sequence is Pleckstrin homology-like domain family B member 3 (640 aa).

5 disordered regions span residues 1–100 (MGTR…AARR), 162–189 (LEQQ…ERDR), 241–262 (LERE…VPDP), 387–412 (GLQR…RPLS), and 476–504 (REGT…PHPP). Residues 76-90 (PPIAMAATPPASTSS) show a composition bias toward low complexity. The stretch at 104–327 (QQLEALTRVA…ERSRLLELNC (224 aa)) forms a coiled coil. Over residues 170-189 (QRGRQQREQEQRRLSQERDR) the composition is skewed to basic and acidic residues. Residues 454–481 (DIAHMERLLQQAMAERERLLKAREGTRR) are a coiled coil. Positions 495–504 (TAPPTPPHPP) are enriched in pro residues. Positions 532-635 (GCCCRGPLVK…WMDVIVTAAD (104 aa)) constitute a PH domain.

The sequence is that of Pleckstrin homology-like domain family B member 3 (PHLDB3) from Homo sapiens (Human).